The sequence spans 391 residues: Solute carrier family 35 member F2 (391 aa).

10 consecutive transmembrane segments (helical) span residues 39–59 (MLLSVALGQVLSLLICGIRLT), 73–93 (LFQSFLNYILLFLVYTTTLAV), 108–128 (WWKYMFLGIIDIEATYLVVKA), 137–157 (IQLLNCFVIPVVILLSWFFLL), 165–185 (FIGAIACILGIGCMAGADVLM), 200–220 (LIGDVLVLGGATLYGISSVCQ), 230–250 (VELLGMIGLFGSFFSGIQLAI), 267–287 (LLYVGFTACMFGLYSFMPVVI), 294–314 (AINLSMLTAELYTFFCGLFLF), and 318–338 (FSGLYLLSFFTILLGLVFYFS). A disordered region spans residues 361–391 (VELPSSGQLEPSVTYTSLSQETEEEPRVRVA). Over residues 365–380 (SSGQLEPSVTYTSLSQ) the composition is skewed to polar residues.

It belongs to the SLC35F solute transporter family.

Its subcellular location is the membrane. Putative solute transporter. The polypeptide is Solute carrier family 35 member F2 (slc35f2) (Xenopus tropicalis (Western clawed frog)).